Reading from the N-terminus, the 638-residue chain is 1-deoxy-D-xylulose-5-phosphate synthase (638 aa).

Thiamine diphosphate is bound by residues His-81 and 122–124 (GHS). Mg(2+) is bound at residue Asp-153. Thiamine diphosphate is bound by residues 154–155 (GS), Asn-182, Tyr-293, and Glu-377. Mg(2+) is bound at residue Asn-182.

The protein belongs to the transketolase family. DXPS subfamily. In terms of assembly, homodimer. Requires Mg(2+) as cofactor. Thiamine diphosphate is required as a cofactor.

It carries out the reaction D-glyceraldehyde 3-phosphate + pyruvate + H(+) = 1-deoxy-D-xylulose 5-phosphate + CO2. It participates in metabolic intermediate biosynthesis; 1-deoxy-D-xylulose 5-phosphate biosynthesis; 1-deoxy-D-xylulose 5-phosphate from D-glyceraldehyde 3-phosphate and pyruvate: step 1/1. In terms of biological role, catalyzes the acyloin condensation reaction between C atoms 2 and 3 of pyruvate and glyceraldehyde 3-phosphate to yield 1-deoxy-D-xylulose-5-phosphate (DXP). This is 1-deoxy-D-xylulose-5-phosphate synthase from Oleidesulfovibrio alaskensis (strain ATCC BAA-1058 / DSM 17464 / G20) (Desulfovibrio alaskensis).